Reading from the N-terminus, the 181-residue chain is Ribonuclease HII (181 aa).

The 181-residue stretch at 1–181 folds into the RNase H type-2 domain; it reads MICGIDEVGR…SLHRKNFKLI (181 aa). Positions 6, 7, and 98 each coordinate a divalent metal cation.

The protein belongs to the RNase HII family. Mn(2+) is required as a cofactor. The cofactor is Mg(2+).

It is found in the cytoplasm. The enzyme catalyses Endonucleolytic cleavage to 5'-phosphomonoester.. Its function is as follows. Endonuclease that specifically degrades the RNA of RNA-DNA hybrids. This Borreliella burgdorferi (strain ZS7) (Borrelia burgdorferi) protein is Ribonuclease HII.